The sequence spans 336 residues: UPF0284 protein Pcal_1534 (336 aa).

The protein belongs to the UPF0284 family.

The polypeptide is UPF0284 protein Pcal_1534 (Pyrobaculum calidifontis (strain DSM 21063 / JCM 11548 / VA1)).